A 654-amino-acid chain; its full sequence is Integrator complex subunit 9 (654 aa).

Met1, Arg2, Thr18, Phe19, Arg504, Lys508, and Arg509 together coordinate 1D-myo-inositol hexakisphosphate.

The protein belongs to the metallo-beta-lactamase superfamily. RNA-metabolizing metallo-beta-lactamase-like family. INTS9 subfamily. As to quaternary structure, belongs to the multiprotein complex Integrator, at least composed of IntS1, IntS2, IntS3, IntS4, omd/IntS5, IntS6, defl/IntS7, IntS8, IntS9, IntS10, IntS11, IntS12, asun/IntS13, IntS14 and IntS15. The core complex associates with protein phosphatase 2A subunits mts/PP2A and Pp2A-29B, to form the Integrator-PP2A (INTAC) complex. Within the complex, interacts with IntS1 and IntS12. IntS9 is part of the RNA endonuclease subcomplex, composed of IntS4, IntS9, IntS11 and inositol hexakisphosphate (InsP6).

It is found in the nucleus. The protein resides in the cytoplasm. The protein localises to the cytosol. Functionally, component of the integrator complex, a multiprotein complex that terminates RNA polymerase II (Pol II) transcription in the promoter-proximal region of genes. The integrator complex provides a quality checkpoint during transcription elongation by driving premature transcription termination of transcripts that are unfavorably configured for transcriptional elongation: the complex terminates transcription by (1) catalyzing dephosphorylation of the C-terminal domain (CTD) of Pol II subunit Polr2A/Rbp1 and Spt5, and (2) degrading the exiting nascent RNA transcript via endonuclease activity. The integrator complex is also involved in the 3'-end processing of the U7 snRNA, and also the spliceosomal snRNAs U1, U2, U4 and U5. The chain is Integrator complex subunit 9 from Drosophila melanogaster (Fruit fly).